We begin with the raw amino-acid sequence, 724 residues long: NAD(+) hydrolase SARM1 (724 aa).

A mitochondrion-targeting transit peptide spans 1 to 27; that stretch reads MVLTLLFSAYKLCRFFTMSGPRPGADR. The interval 24-56 is disordered; that stretch reads GADRLTVPGPDRSGGASPWWAAGGRGSREVSPG. The segment covering 36 to 45 has biased composition (low complexity); the sequence is SGGASPWWAA. An ARM 1 repeat occupies 60 to 100; it reads EVQGALERSLPELQQALSELKQASAARAVGAGLAEVFQLVE. NAD(+) is bound by residues Trp-103, Arg-110, 149 to 157, and 190 to 193; these read EQILVAENR and HMFK. 7 ARM repeats span residues 114 to 153, 155 to 193, 196 to 235, 237 to 280, 281 to 314, 315 to 354, and 359 to 402; these read QGLC…QILV, ENRD…HMFK, EETC…NCAL, GGQT…LATN, KEVE…CLVD, ASDT…AEAA, and QGKT…EEVP. SAM domains lie at 412–476 and 486–548; these read WKEA…LKTF and NLAD…MLHS. A phosphoserine mark is found at Ser-548 and Ser-558. The region spanning 560-703 is the TIR domain; it reads DTPDVFISYR…KIIRFLQGRP (144 aa). NAD(+)-binding positions include 569–570 and Glu-599; that span reads RR. The active site involves Glu-642. Positions 703-716 are enriched in polar residues; it reads PSQDSSAGSDTSLE. The segment at 703–724 is disordered; it reads PSQDSSAGSDTSLEGATPMGLP.

The protein belongs to the SARM1 family. In terms of assembly, homooctamer; forms an octameric ring via SAM domains. Interacts with TICAM1/TRIF and thereby interferes with TICAM1/TRIF function. Interacts with SDC2 (via cytoplasmic domain) and MAPK10/JNK3. Post-translationally, phosphorylation at Ser-548 by JNK kinases (MAPK8, MAPK9 and /or MAPK10) enhance the NAD(+) hydrolase (NADase) activity. Phosphorylation at Ser-548 and subsequent activation takes place in response to oxidative stress conditions and inhibits mitochondrial respiration. As to expression, widely expressed in the brain and neurons (at protein level). Expressed in photoreceptor cells of the neural retina.

Its subcellular location is the cytoplasm. It localises to the cell projection. The protein resides in the axon. The protein localises to the dendrite. It is found in the synapse. Its subcellular location is the mitochondrion. The catalysed reaction is NAD(+) + H2O = ADP-D-ribose + nicotinamide + H(+). The enzyme catalyses NAD(+) = cyclic ADP-beta-D-ribose + nicotinamide + H(+). It carries out the reaction NADP(+) + H2O = ADP-D-ribose 2'-phosphate + nicotinamide + H(+). Its activity is regulated as follows. Autoinhibited: in the inactive state, the enzymatic TIR domain is held apart by the autoinhibiting ARM repeats. NAD(+)-binding to ARM repeats maintains an inactive state by promoting interaction between ARM repeats and the TIR domain, thereby facilitating inhibition of the enzymatic TIR domain. Following activation, possibly by nicotinamide mononucleotide (NMN), auto-inhibitory interactions are released, allowing self-association of the TIR domains and subsequent activation of the NAD(+) hydrolase (NADase) activity. Self-association of TIR domains is facilitated by the octamer of SAM domains. Functionally, NAD(+) hydrolase, which plays a key role in axonal degeneration following injury by regulating NAD(+) metabolism. Acts as a negative regulator of MYD88- and TRIF-dependent toll-like receptor signaling pathway by promoting Wallerian degeneration, an injury-induced form of programmed subcellular death which involves degeneration of an axon distal to the injury site. Wallerian degeneration is triggered by NAD(+) depletion: in response to injury, SARM1 is activated and catalyzes cleavage of NAD(+) into ADP-D-ribose (ADPR), cyclic ADPR (cADPR) and nicotinamide; NAD(+) cleavage promoting cytoskeletal degradation and axon destruction. Also able to hydrolyze NADP(+), but not other NAD(+)-related molecules. Can activate neuronal cell death in response to stress. Regulates dendritic arborization through the MAPK4-JNK pathway. Involved in innate immune response: inhibits both TICAM1/TRIF- and MYD88-dependent activation of JUN/AP-1, TRIF-dependent activation of NF-kappa-B and IRF3, and the phosphorylation of MAPK14/p38. In Mus musculus (Mouse), this protein is NAD(+) hydrolase SARM1.